The primary structure comprises 412 residues: Serine hydroxymethyltransferase (412 aa).

(6S)-5,6,7,8-tetrahydrofolate is bound by residues Leu117 and 121-123 (GHL). N6-(pyridoxal phosphate)lysine is present on Lys226. (6S)-5,6,7,8-tetrahydrofolate is bound at residue 349–351 (SPF).

It belongs to the SHMT family. In terms of assembly, homodimer. It depends on pyridoxal 5'-phosphate as a cofactor.

It localises to the cytoplasm. The enzyme catalyses (6R)-5,10-methylene-5,6,7,8-tetrahydrofolate + glycine + H2O = (6S)-5,6,7,8-tetrahydrofolate + L-serine. Its pathway is one-carbon metabolism; tetrahydrofolate interconversion. It participates in amino-acid biosynthesis; glycine biosynthesis; glycine from L-serine: step 1/1. In terms of biological role, catalyzes the reversible interconversion of serine and glycine with tetrahydrofolate (THF) serving as the one-carbon carrier. This reaction serves as the major source of one-carbon groups required for the biosynthesis of purines, thymidylate, methionine, and other important biomolecules. Also exhibits THF-independent aldolase activity toward beta-hydroxyamino acids, producing glycine and aldehydes, via a retro-aldol mechanism. This Geobacillus thermodenitrificans (strain NG80-2) protein is Serine hydroxymethyltransferase.